A 473-amino-acid chain; its full sequence is Phosphatidylserine synthase 1 (473 aa).

Residue Ala2 is modified to N-acetylalanine. Residues 2 to 35 (ASCVGSRTLSKDDVNYRMHFRMINEQQVEDITID) lie on the Cytoplasmic side of the membrane. A helical membrane pass occupies residues 36 to 56 (FFYRPHTITLLSFTIISLMYF). The Lumenal segment spans residues 57–72 (AFTRDDCVPEDNIWRG). The chain crosses the membrane as a helical span at residues 73 to 93 (ILSVIFFFLIISVLAFPNGPF). Residues 94–102 (TRPHPALWR) lie on the Cytoplasmic side of the membrane. The helical transmembrane segment at 103-123 (MVFGLSVLYFLFLVFLLFLNF) threads the bilayer. Over 124-186 (EQVKSLMYWL…AMKALLIRSY (63 aa)) the chain is Lumenal. A helical transmembrane segment spans residues 187–207 (GLCWTISITWELTELFFMHLL). Topologically, residues 208 to 216 (PNFAECWWD) are cytoplasmic. The chain crosses the membrane as a helical span at residues 217–237 (QVILDILLCNGGGIWLGMVVC). Residues 238–286 (RFLEMRTYHWASFKDIHTTTGKIKRAVLQFTPASWTYVRWFDPKSSFQR) are Lumenal-facing. The chain crosses the membrane as a helical span at residues 287 to 307 (VAGIYLFMIIWQLTELNTFFL). Residues 308-319 (KHIFVFQASHPL) are Cytoplasmic-facing. Residues 320–342 (SWCRILFIGCITAPTVRQYYAYL) traverse the membrane as a helical segment. Over 343–355 (TDTQCKRVGTQCW) the chain is Lumenal. A helical transmembrane segment spans residues 356 to 376 (VFGVIGFLEAIVCIKFGQDLF). Residues 377-383 (SKTQILY) are Cytoplasmic-facing. The chain crosses the membrane as a helical span at residues 384-404 (VVLWLLCVAFTTFLCLYGMVW). The Lumenal segment spans residues 405–473 (YAEHYGHREK…SKVTNGVGKK (69 aa)). 4 positions are modified to phosphoserine: Ser417, Ser425, Ser442, and Ser454. The disordered stretch occupies residues 430–473 (WYHGKGSKGSEDSPPKHSNNNESHSSRRRNRHSKSKVTNGVGKK). A compositionally biased stretch (basic residues) spans 455–464 (SRRRNRHSKS).

The protein belongs to the phosphatidyl serine synthase family.

The protein resides in the endoplasmic reticulum membrane. The catalysed reaction is a 1,2-diacyl-sn-glycero-3-phosphoethanolamine + L-serine = a 1,2-diacyl-sn-glycero-3-phospho-L-serine + ethanolamine. It catalyses the reaction a 1,2-diacyl-sn-glycero-3-phosphocholine + L-serine = a 1,2-diacyl-sn-glycero-3-phospho-L-serine + choline. It functions in the pathway phospholipid metabolism; phosphatidylserine biosynthesis. In terms of biological role, catalyzes a base-exchange reaction in which the polar head group of phosphatidylethanolamine (PE) or phosphatidylcholine (PC) is replaced by L-serine. Catalyzes mainly the conversion of phosphatidylcholine but also converts, in vitro and to a lesser extent, phosphatidylethanolamine. The protein is Phosphatidylserine synthase 1 (Ptdss1) of Rattus norvegicus (Rat).